Reading from the N-terminus, the 483-residue chain is Fructose-like PTS system EIIBC component (483 aa).

One can recognise a PTS EIIB type-2 domain in the interval 1–105; it reads MESSLRIVAI…IDQIFSELPT (105 aa). Catalysis depends on Cys13, which acts as the Phosphocysteine intermediate; for EIIB activity. Cys13 is modified (phosphocysteine; by EIIA). The PTS EIIC type-2 domain occupies 128 to 475; sequence VMSHLMAGVS…LWLRRKAKAA (348 aa). The next 10 helical transmembrane spans lie at 132–152, 180–200, 204–224, 227–247, 264–284, 303–323, 344–364, 380–400, 402–422, and 442–462; these read LMAG…LVAL, IGYL…ASSI, PAFA…LLGT, GAGF…VFWF, LIPF…IGPV, MKFA…GGPI, AIVG…TFIA, IVVG…AAPL, MITA…AFGI, and VGSF…FIIV.

The protein localises to the cell inner membrane. It catalyses the reaction D-fructose(out) + N(pros)-phospho-L-histidyl-[protein] = D-fructose 1-phosphate(in) + L-histidyl-[protein]. The phosphoenolpyruvate-dependent sugar phosphotransferase system (sugar PTS), a major carbohydrate active transport system, catalyzes the phosphorylation of incoming sugar substrates concomitantly with their translocation across the cell membrane. The enzyme II FrvAB PTS system is involved in fructose transport. This Escherichia coli (strain K12) protein is Fructose-like PTS system EIIBC component.